The chain runs to 162 residues: MARGLNKVMLIGHLGNDPERRETASGQSVVNFTLATSEGFKDSSGNLQERTEWHRIVAWGKLADICSQYLKKGRQVYIEGRLQTRSWDDNKTGDKKYATEIVCTDMQMLGAKDSGGGTSDASYSQNRPSYSRPSRPEPSSGNYGASPSSGGAQEFEKDDLPF.

Residues leucine 5–glycine 110 enclose the SSB domain. The tract at residues glycine 110–phenylalanine 162 is disordered. Residues serine 122–serine 140 are compositionally biased toward low complexity. Over residues glycine 141–glycine 151 the composition is skewed to polar residues.

In terms of assembly, homotetramer.

The polypeptide is Single-stranded DNA-binding protein 1 (ssb1) (Chlorobaculum tepidum (strain ATCC 49652 / DSM 12025 / NBRC 103806 / TLS) (Chlorobium tepidum)).